The chain runs to 388 residues: Spermidine/putrescine import ATP-binding protein PotA (388 aa).

The ABC transporter domain occupies 17–247 (IEIDHVTKRF…PATVFVANFI (231 aa)). Residue 49–56 (GPSGCGKT) participates in ATP binding.

This sequence belongs to the ABC transporter superfamily. Spermidine/putrescine importer (TC 3.A.1.11.1) family. As to quaternary structure, the complex is composed of two ATP-binding proteins (PotA), two transmembrane proteins (PotB and PotC) and a solute-binding protein (PotD).

It localises to the cell membrane. The catalysed reaction is ATP + H2O + polyamine-[polyamine-binding protein]Side 1 = ADP + phosphate + polyamineSide 2 + [polyamine-binding protein]Side 1.. Its function is as follows. Part of the ABC transporter complex PotABCD involved in spermidine/putrescine import. Responsible for energy coupling to the transport system. The polypeptide is Spermidine/putrescine import ATP-binding protein PotA (Mycobacterium sp. (strain KMS)).